Consider the following 511-residue polypeptide: Bifunctional purine biosynthesis protein PurH (511 aa).

An MGS-like domain is found at 1-144; it reads MKTALLSVSD…KNFASVLPVV (144 aa).

The protein belongs to the PurH family.

It catalyses the reaction (6R)-10-formyltetrahydrofolate + 5-amino-1-(5-phospho-beta-D-ribosyl)imidazole-4-carboxamide = 5-formamido-1-(5-phospho-D-ribosyl)imidazole-4-carboxamide + (6S)-5,6,7,8-tetrahydrofolate. It carries out the reaction IMP + H2O = 5-formamido-1-(5-phospho-D-ribosyl)imidazole-4-carboxamide. Its pathway is purine metabolism; IMP biosynthesis via de novo pathway; 5-formamido-1-(5-phospho-D-ribosyl)imidazole-4-carboxamide from 5-amino-1-(5-phospho-D-ribosyl)imidazole-4-carboxamide (10-formyl THF route): step 1/1. The protein operates within purine metabolism; IMP biosynthesis via de novo pathway; IMP from 5-formamido-1-(5-phospho-D-ribosyl)imidazole-4-carboxamide: step 1/1. The sequence is that of Bifunctional purine biosynthesis protein PurH from Pediococcus pentosaceus (strain ATCC 25745 / CCUG 21536 / LMG 10740 / 183-1w).